Reading from the N-terminus, the 309-residue chain is MIKIYAPASIGNVGVGFDILGAAIIPINGSLLGDFVTVKLSNKFNLVNKGIFSNKLPKNTEQNIVWKCWLKFCNTIKRNIPVSIILEKNMPIGSGLGSSACSIVATLVAMNEFCDKPLNSKELLLLMGEVEGEISGSIHYDNVAPCYLGGLQLILEDSKIISQTIPNFKNWFWIVAWPGTKVPTAEARDILPKKYKKETCIKNSRYLAGFIHASYSQQPHLAARLMQDFIAEPYRIKLLPNYLYVKEKIKKIGAISSGISGSGPTIFSISDNINTAQKISAWLTENYLQNTTGFVHICFLDSKGVRKIG.

91–101 contributes to the ATP binding site; that stretch reads PIGSGLGSSAC.

The protein belongs to the GHMP kinase family. Homoserine kinase subfamily.

Its subcellular location is the cytoplasm. The enzyme catalyses L-homoserine + ATP = O-phospho-L-homoserine + ADP + H(+). Its pathway is amino-acid biosynthesis; L-threonine biosynthesis; L-threonine from L-aspartate: step 4/5. Functionally, catalyzes the ATP-dependent phosphorylation of L-homoserine to L-homoserine phosphate. The polypeptide is Homoserine kinase (Buchnera aphidicola subsp. Acyrthosiphon pisum (strain 5A)).